A 177-amino-acid chain; its full sequence is Transcription termination/antitermination protein NusG (177 aa).

The KOW domain maps to 128 to 156 (ETVKVIDGPFANFTGSIEEIDYDKSKVKV).

This sequence belongs to the NusG family.

Functionally, participates in transcription elongation, termination and antitermination. Stimulates RNA polymerase pausing at U107 and U144 in the trp leader. NusG-stimulated pausing is sequence specific. Does not affect trp leader termination. The protein is Transcription termination/antitermination protein NusG of Bacillus subtilis (strain 168).